The sequence spans 370 residues: UDP-3-O-acylglucosamine N-acyltransferase (370 aa).

Histidine 252 acts as the Proton acceptor in catalysis. Residues 348–370 (NAAAEKRDGPAPNAASKATGDKV) are disordered.

Belongs to the transferase hexapeptide repeat family. LpxD subfamily. As to quaternary structure, homotrimer.

The enzyme catalyses a UDP-3-O-[(3R)-3-hydroxyacyl]-alpha-D-glucosamine + a (3R)-hydroxyacyl-[ACP] = a UDP-2-N,3-O-bis[(3R)-3-hydroxyacyl]-alpha-D-glucosamine + holo-[ACP] + H(+). It participates in bacterial outer membrane biogenesis; LPS lipid A biosynthesis. Its function is as follows. Catalyzes the N-acylation of UDP-3-O-acylglucosamine using 3-hydroxyacyl-ACP as the acyl donor. Is involved in the biosynthesis of lipid A, a phosphorylated glycolipid that anchors the lipopolysaccharide to the outer membrane of the cell. This is UDP-3-O-acylglucosamine N-acyltransferase from Paraburkholderia phytofirmans (strain DSM 17436 / LMG 22146 / PsJN) (Burkholderia phytofirmans).